Reading from the N-terminus, the 337-residue chain is Phosphate acyltransferase (337 aa).

It belongs to the PlsX family. Homodimer. Probably interacts with PlsY.

It localises to the cytoplasm. The enzyme catalyses a fatty acyl-[ACP] + phosphate = an acyl phosphate + holo-[ACP]. Its pathway is lipid metabolism; phospholipid metabolism. Functionally, catalyzes the reversible formation of acyl-phosphate (acyl-PO(4)) from acyl-[acyl-carrier-protein] (acyl-ACP). This enzyme utilizes acyl-ACP as fatty acyl donor, but not acyl-CoA. In Listeria monocytogenes serotype 4b (strain F2365), this protein is Phosphate acyltransferase.